The following is a 526-amino-acid chain: Cytochrome P450 monooxygeanse terK (526 aa).

The helical transmembrane segment at 21 to 43 (NWGQLTGALLFLAACTWIYLPAF) threads the bilayer. C465 contacts heme.

Belongs to the cytochrome P450 family. Requires heme as cofactor.

It localises to the membrane. It functions in the pathway secondary metabolite biosynthesis. Cytochrome P450 monooxygeanse; part of the gene cluster that mediates the biosynthesis of terpendoles, indole-diterpene (IDT) mycotoxins including terpendole I, terpendole K, terpendole C, as well as the kinesin Eg5 inhibitor terpendole E. Terpendoles biosynthesis begins with the synthesis of geranylgeranyl diphosphate (GGPP) by a yet unidentified GGPP synthase. Condensation of indole-3-glycerol phosphate with GGPP by the prenyltransferase terC then forms 3-geranylgeranylindole (3-GGI), followed by epoxidation and cyclization of this intermediate (by the FAD-dependent monooxygeanse terM and the terpene cyclase terB) to form paspaline. The cytochrome monooxygenase terQ then hydroxylates paspalline at C-11 to yield terpendole E. The cytochrome monooxygenase terP converts terpendole E to 13-desoxyterpendole I, and terQ converts 13-desoxyterpendole I into terpendole I. TerF and terK are required for conversion of terpendole I to terpendole C which is further converted to terpendole K. In Tolypocladium album (Soil fungus), this protein is Cytochrome P450 monooxygeanse terK.